Reading from the N-terminus, the 429-residue chain is Adenylosuccinate synthetase (429 aa).

GTP-binding positions include 12–18 (GDEGKGK) and 40–42 (GHT). The active-site Proton acceptor is D13. Residues D13 and G40 each coordinate Mg(2+). IMP contacts are provided by residues 13 to 16 (DEGK), 38 to 41 (NAGH), T129, R143, Q223, T238, and R302. H41 functions as the Proton donor in the catalytic mechanism. 298-304 (TVTGRKR) contributes to the substrate binding site. GTP is bound by residues R304, 330-332 (KLD), and 412-414 (STS).

The protein belongs to the adenylosuccinate synthetase family. In terms of assembly, homodimer. Mg(2+) serves as cofactor.

It is found in the cytoplasm. It carries out the reaction IMP + L-aspartate + GTP = N(6)-(1,2-dicarboxyethyl)-AMP + GDP + phosphate + 2 H(+). It participates in purine metabolism; AMP biosynthesis via de novo pathway; AMP from IMP: step 1/2. In terms of biological role, plays an important role in the de novo pathway of purine nucleotide biosynthesis. Catalyzes the first committed step in the biosynthesis of AMP from IMP. In Novosphingobium aromaticivorans (strain ATCC 700278 / DSM 12444 / CCUG 56034 / CIP 105152 / NBRC 16084 / F199), this protein is Adenylosuccinate synthetase.